A 1214-amino-acid polypeptide reads, in one-letter code: Myosin-1 (1214 aa).

A disordered region spans residues 1 to 21; sequence MAIIKRGARNKTAQEPAKRSA. A Myosin motor domain is found at 36–715; that stretch reads VGVSDLTLLS…TLFALEHMRD (680 aa). Residue 129–136 coordinates ATP; the sequence is GESGAGKT. Phosphoserine is present on S357. Residues 404 to 486 form an actin-binding region; that stretch reads SIGILDIYGF…PGIFAAMNDS (83 aa). 2 IQ domains span residues 719–739 and 740–765; these read YNMA…RIDS and ATRI…EGSK. One can recognise a TH1 domain in the interval 771–961; that stretch reads KERRTMSLLG…TILVRRGHPA (191 aa). 3 disordered regions span residues 926-1090, 1129-1177, and 1193-1214; these read KPGK…SELP, HQGG…AAAQ, and NKMR…DDDW. A compositionally biased stretch (basic residues) spans 965–980; sequence QKKKPKKGKGHSKHHS. 2 stretches are compositionally biased toward low complexity: residues 981–1000 and 1037–1057; these read TSTS…APVS and AAQP…QKKV. Residues 1058–1067 show a composition bias toward pro residues; the sequence is APPPPPPPPM. Positions 1069-1131 constitute an SH3 domain; it reads SSEPKYEAAY…PTNYVVKHQG (63 aa). The segment covering 1157–1177 has biased composition (low complexity); it reads VSSSQSETATTATPASVAAAQ. Over residues 1200–1214 the composition is skewed to acidic residues; that stretch reads DGEDNGNDDDDDDDW.

This sequence belongs to the TRAFAC class myosin-kinesin ATPase superfamily. Myosin family. Phosphorylation of the TEDS site (Ser-357) is required for the polarization of the actin cytoskeleton. Phosphorylation probably activates the myosin-I ATPase activity.

The protein resides in the cytoplasm. The protein localises to the cytoskeleton. It localises to the actin patch. Its function is as follows. Type-I myosin implicated in the organization of the actin cytoskeleton. Required for proper actin cytoskeleton polarization. At the cell cortex, assembles in patch-like structures together with proteins from the actin-polymerizing machinery and promotes actin assembly. Functions as actin nucleation-promoting factor (NPF) for the Arp2/3 complex. The sequence is that of Myosin-1 (MYO1) from Vanderwaltozyma polyspora (strain ATCC 22028 / DSM 70294 / BCRC 21397 / CBS 2163 / NBRC 10782 / NRRL Y-8283 / UCD 57-17) (Kluyveromyces polysporus).